A 139-amino-acid chain; its full sequence is D-ribose pyranase (139 aa).

Catalysis depends on H20, which acts as the Proton donor. Residues D28, H106, and 128–130 (YAN) contribute to the substrate site.

Belongs to the RbsD / FucU family. RbsD subfamily. As to quaternary structure, homodecamer.

The protein localises to the cytoplasm. It carries out the reaction beta-D-ribopyranose = beta-D-ribofuranose. The protein operates within carbohydrate metabolism; D-ribose degradation; D-ribose 5-phosphate from beta-D-ribopyranose: step 1/2. In terms of biological role, catalyzes the interconversion of beta-pyran and beta-furan forms of D-ribose. The chain is D-ribose pyranase from Photorhabdus laumondii subsp. laumondii (strain DSM 15139 / CIP 105565 / TT01) (Photorhabdus luminescens subsp. laumondii).